The sequence spans 286 residues: tRNA (guanine-N(7)-)-methyltransferase (286 aa).

Residues 1–22 (MGRARPKSQKRGDYRVSRSQEN) are disordered. S-adenosyl-L-methionine-binding positions include Gly104, 127–128 (EI), 162–163 (NS), and Cys182. Asp185 is an active-site residue. Residue 260-262 (TEE) coordinates S-adenosyl-L-methionine.

It belongs to the class I-like SAM-binding methyltransferase superfamily. TrmB family. As to quaternary structure, forms a complex with TRM82.

The protein localises to the nucleus. It carries out the reaction guanosine(46) in tRNA + S-adenosyl-L-methionine = N(7)-methylguanosine(46) in tRNA + S-adenosyl-L-homocysteine. Its pathway is tRNA modification; N(7)-methylguanine-tRNA biosynthesis. In terms of biological role, catalyzes the formation of N(7)-methylguanine at position 46 (m7G46) in tRNA. The sequence is that of tRNA (guanine-N(7)-)-methyltransferase from Colletotrichum orbiculare (strain 104-T / ATCC 96160 / CBS 514.97 / LARS 414 / MAFF 240422) (Cucumber anthracnose fungus).